The following is a 281-amino-acid chain: 4-deoxy-L-threo-5-hexosulose-uronate ketol-isomerase (281 aa).

Zn(2+)-binding residues include His-198, His-200, Glu-205, and His-248.

It belongs to the KduI family. The cofactor is Zn(2+).

It catalyses the reaction 5-dehydro-4-deoxy-D-glucuronate = 3-deoxy-D-glycero-2,5-hexodiulosonate. It participates in glycan metabolism; pectin degradation; 2-dehydro-3-deoxy-D-gluconate from pectin: step 4/5. In terms of biological role, catalyzes the isomerization of 5-dehydro-4-deoxy-D-glucuronate to 3-deoxy-D-glycero-2,5-hexodiulosonate. This is 4-deoxy-L-threo-5-hexosulose-uronate ketol-isomerase from Levilactobacillus brevis (strain ATCC 367 / BCRC 12310 / CIP 105137 / JCM 1170 / LMG 11437 / NCIMB 947 / NCTC 947) (Lactobacillus brevis).